The chain runs to 237 residues: Class B acid phosphatase (237 aa).

The signal sequence occupies residues 1-25 (MRKVSLALSAACLLFTLNYTASALA). D69 serves as the catalytic Nucleophile. Residues D69 and D71 each contribute to the Mg(2+) site. The active-site Proton donor is D71. Residues 137–138 (TG) and K177 contribute to the substrate site. D192 is a binding site for Mg(2+).

This sequence belongs to the class B bacterial acid phosphatase family. In terms of assembly, homotetramer. Requires Mg(2+) as cofactor.

It is found in the periplasm. It catalyses the reaction a phosphate monoester + H2O = an alcohol + phosphate. Functionally, dephosphorylates several organic phosphate monoesters. Also has a phosphotransferase activity catalyzing the transfer of low-energy phosphate groups from organic phosphate monoesters to free hydroxyl groups of various organic compounds. The protein is Class B acid phosphatase of Citrobacter rodentium (strain ICC168) (Citrobacter freundii biotype 4280).